A 229-amino-acid chain; its full sequence is Enolase-phosphatase E1 (229 aa).

Polar residues predominate over residues 208–218 (DTQSTHRQVSS). The disordered stretch occupies residues 208 to 229 (DTQSTHRQVSSFDDIHPEQIPT). The segment covering 220 to 229 (DDIHPEQIPT) has biased composition (basic and acidic residues).

The protein belongs to the HAD-like hydrolase superfamily. MasA/MtnC family. In terms of assembly, monomer. Requires Mg(2+) as cofactor.

The catalysed reaction is 5-methylsulfanyl-2,3-dioxopentyl phosphate + H2O = 1,2-dihydroxy-5-(methylsulfanyl)pent-1-en-3-one + phosphate. It functions in the pathway amino-acid biosynthesis; L-methionine biosynthesis via salvage pathway; L-methionine from S-methyl-5-thio-alpha-D-ribose 1-phosphate: step 3/6. The protein operates within amino-acid biosynthesis; L-methionine biosynthesis via salvage pathway; L-methionine from S-methyl-5-thio-alpha-D-ribose 1-phosphate: step 4/6. Functionally, bifunctional enzyme that catalyzes the enolization of 2,3-diketo-5-methylthiopentyl-1-phosphate (DK-MTP-1-P) into the intermediate 2-hydroxy-3-keto-5-methylthiopentenyl-1-phosphate (HK-MTPenyl-1-P), which is then dephosphorylated to form the acireductone 1,2-dihydroxy-3-keto-5-methylthiopentene (DHK-MTPene). The protein is Enolase-phosphatase E1 of Cronobacter sakazakii (Enterobacter sakazakii).